A 158-amino-acid polypeptide reads, in one-letter code: Na(+)/H(+) antiporter subunit E (158 aa).

2 consecutive transmembrane segments (helical) span residues 21–41 and 51–71; these read SPSA…LFFF and LWKL…LYLA.

Belongs to the CPA3 antiporters (TC 2.A.63) subunit E family. In terms of assembly, forms a heterooligomeric complex that consists of seven subunits: MrpA, MrpB, MrpC, MrpD, MrpE, MrpF and MrpG.

Its subcellular location is the cell membrane. Its function is as follows. Mrp complex is a Na(+)/H(+) antiporter that is considered to be the major Na(+) excretion system in B.subtilis. Has a major role in Na(+) resistance and a minor role in Na(+)- and K(+)-dependent pH homeostasis as compared to TetB. MrpA may be the actual Na(+)/H(+) antiporter, although the six other Mrp proteins are all required for Na(+)/H(+) antiport activity and Na(+) resistance. MrpA is required for initiation of sporulation when external Na(+) concentration increases. Also transports Li(+) but not K(+), Ca(2+) or Mg(2+). The chain is Na(+)/H(+) antiporter subunit E (mrpE) from Bacillus subtilis (strain 168).